The sequence spans 225 residues: Thymidylate kinase (225 aa).

9 to 16 (GIEGCGKT) is a binding site for ATP.

This sequence belongs to the thymidylate kinase family.

It carries out the reaction dTMP + ATP = dTDP + ADP. Functionally, phosphorylation of dTMP to form dTDP in both de novo and salvage pathways of dTTP synthesis. The polypeptide is Thymidylate kinase (Geobacter sp. (strain M21)).